The following is a 111-amino-acid chain: Phosphoribosyl-AMP cyclohydrolase (111 aa).

A Mg(2+)-binding site is contributed by Asp80. A Zn(2+)-binding site is contributed by Cys81. Positions 82 and 84 each coordinate Mg(2+). The Zn(2+) site is built by Cys97 and Cys104.

Belongs to the PRA-CH family. Homodimer. Mg(2+) is required as a cofactor. The cofactor is Zn(2+).

Its subcellular location is the cytoplasm. It catalyses the reaction 1-(5-phospho-beta-D-ribosyl)-5'-AMP + H2O = 1-(5-phospho-beta-D-ribosyl)-5-[(5-phospho-beta-D-ribosylamino)methylideneamino]imidazole-4-carboxamide. The protein operates within amino-acid biosynthesis; L-histidine biosynthesis; L-histidine from 5-phospho-alpha-D-ribose 1-diphosphate: step 3/9. Its function is as follows. Catalyzes the hydrolysis of the adenine ring of phosphoribosyl-AMP. The chain is Phosphoribosyl-AMP cyclohydrolase from Mycobacterium ulcerans (strain Agy99).